Consider the following 258-residue polypeptide: Protein T1 (258 aa).

An N-terminal signal peptide occupies residues 1–17; sequence MRRLCIILLVYVYATFA. Residues Asn-67, Asn-151, and Asn-172 are each glycosylated (N-linked (GlcNAc...) asparagine; by host).

This sequence belongs to the poxviruses A41 family.

In Rabbit fibroma virus (strain Kasza) (RFV), this protein is Protein T1.